A 266-amino-acid polypeptide reads, in one-letter code: MDTFQVIILALIQGLTEFLPISSSAHLILPAQLLGWEDQGLSFDVAVNTGSLFAVVIYFRNELWAMFKAWIASMVKGQHSDDSKLAWWIILATLPAVFFGFIAKDFIETHLRSAGVIAVTTIVFGLLLWWADKMSRRDLTVYQTGWRKALLIGFAQALALIPGTSRSGATMTAALMLGLSRDAAARFSFLMSVPVSLGAAILVGKDLAESPLPIDYQALTLGTVISFVAAYLCIHYFLKIISRMGMTPFVIYRLILGAVLCGFIFL.

Transmembrane regions (helical) follow at residues 1 to 21 (MDTFQVIILALIQGLTEFLPI), 39 to 59 (QGLSFDVAVNTGSLFAVVIYF), 87 to 107 (WWIILATLPAVFFGFIAKDFI), 111 to 131 (LRSAGVIAVTTIVFGLLLWWA), 149 to 169 (ALLIGFAQALALIPGTSRSGA), 183 to 203 (AAARFSFLMSVPVSLGAAILV), 218 to 238 (ALTLGTVISFVAAYLCIHYFL), and 246 to 266 (MTPFVIYRLILGAVLCGFIFL).

This sequence belongs to the UppP family.

The protein localises to the cell inner membrane. The enzyme catalyses di-trans,octa-cis-undecaprenyl diphosphate + H2O = di-trans,octa-cis-undecaprenyl phosphate + phosphate + H(+). Functionally, catalyzes the dephosphorylation of undecaprenyl diphosphate (UPP). Confers resistance to bacitracin. The protein is Undecaprenyl-diphosphatase of Shewanella sp. (strain MR-7).